Here is a 230-residue protein sequence, read N- to C-terminus: GTP cyclohydrolase III (230 aa).

Belongs to the archaeal-type GTP cyclohydrolase family.

It catalyses the reaction GTP + 3 H2O = 2-amino-5-formylamino-6-(5-phospho-D-ribosylamino)pyrimidin-4(3H)-one + 2 phosphate + 2 H(+). Its function is as follows. Catalyzes the formation of 2-amino-5-formylamino-6-ribofuranosylamino-4(3H)-pyrimidinone ribonucleotide monophosphate and inorganic phosphate from GTP. Also has an independent pyrophosphate phosphohydrolase activity. The protein is GTP cyclohydrolase III of Saccharolobus islandicus (strain M.16.27) (Sulfolobus islandicus).